Here is a 132-residue protein sequence, read N- to C-terminus: Large ribosomal subunit protein bL17 (132 aa).

It belongs to the bacterial ribosomal protein bL17 family. As to quaternary structure, part of the 50S ribosomal subunit. Contacts protein L32.

The chain is Large ribosomal subunit protein bL17 from Anaplasma phagocytophilum (strain HZ).